The chain runs to 518 residues: Bifunctional purine biosynthesis protein PurH (518 aa).

The MGS-like domain maps to 1–146 (MSPIALLSVS…KNHQDVLVVT (146 aa)).

Belongs to the PurH family.

The enzyme catalyses (6R)-10-formyltetrahydrofolate + 5-amino-1-(5-phospho-beta-D-ribosyl)imidazole-4-carboxamide = 5-formamido-1-(5-phospho-D-ribosyl)imidazole-4-carboxamide + (6S)-5,6,7,8-tetrahydrofolate. It catalyses the reaction IMP + H2O = 5-formamido-1-(5-phospho-D-ribosyl)imidazole-4-carboxamide. Its pathway is purine metabolism; IMP biosynthesis via de novo pathway; 5-formamido-1-(5-phospho-D-ribosyl)imidazole-4-carboxamide from 5-amino-1-(5-phospho-D-ribosyl)imidazole-4-carboxamide (10-formyl THF route): step 1/1. The protein operates within purine metabolism; IMP biosynthesis via de novo pathway; IMP from 5-formamido-1-(5-phospho-D-ribosyl)imidazole-4-carboxamide: step 1/1. The polypeptide is Bifunctional purine biosynthesis protein PurH (Prochlorococcus marinus (strain NATL1A)).